The following is a 103-amino-acid chain: Protamine-2 (103 aa).

The segment at 1–103 (MVRYRTRSLS…RTRRRRCRRY (103 aa)) is disordered. 2 positions are modified to phosphoserine: S8 and S10. The span at 8–17 (SLSERPHEVH) shows a compositional bias: basic and acidic residues. A compositionally biased stretch (low complexity) spans 18–29 (GQQVHGQDQGHN). Residue S37 is modified to Phosphoserine. The segment covering 39–48 (EHVEVYERTH) has biased composition (basic and acidic residues). The segment covering 49–103 (QGHSHHRRRRCSQRRLHRIHRRRHRSCRRRRRRSCRHRRRHRRGCRTRRRRCRRY) has biased composition (basic residues).

It belongs to the protamine P2 family. Interacts with TDRP. In terms of processing, proteolytic processing into mature chains is required for histone eviction during spermatogenesis. Transition proteins (TNP1 and TNP2) are required for processing. As to expression, testis.

The protein localises to the nucleus. The protein resides in the chromosome. Its function is as follows. Protamines substitute for histones in the chromatin of sperm during the haploid phase of spermatogenesis. They compact sperm DNA into a highly condensed, stable and inactive complex. The chain is Protamine-2 (PRM2) from Erythrocebus patas (Red guenon).